Reading from the N-terminus, the 446-residue chain is Chromosomal replication initiator protein DnaA (446 aa).

The tract at residues 1–72 (MKNISDLWNQ…ADTIYDLTGE (72 aa)) is domain I, interacts with DnaA modulators. A domain II region spans residues 72-109 (EELSIKFVIPQNQNEEDFMPKSPIKKMSKEEPADFPQN). Positions 110–326 (MLNPKYTFDT…GALIRVVAYS (217 aa)) are domain III, AAA+ region. ATP contacts are provided by glycine 154, glycine 156, lysine 157, and threonine 158. The domain IV, binds dsDNA stretch occupies residues 327-446 (SLINKDINAD…QIKEIKEQLR (120 aa)).

The protein belongs to the DnaA family. In terms of assembly, oligomerizes as a right-handed, spiral filament on DNA at oriC.

It localises to the cytoplasm. Its function is as follows. Plays an essential role in the initiation and regulation of chromosomal replication. ATP-DnaA binds to the origin of replication (oriC) to initiate formation of the DNA replication initiation complex once per cell cycle. Binds the DnaA box (a 9 base pair repeat at the origin) and separates the double-stranded (ds)DNA. Forms a right-handed helical filament on oriC DNA; dsDNA binds to the exterior of the filament while single-stranded (ss)DNA is stabiized in the filament's interior. The ATP-DnaA-oriC complex binds and stabilizes one strand of the AT-rich DNA unwinding element (DUE), permitting loading of DNA polymerase. After initiation quickly degrades to an ADP-DnaA complex that is not apt for DNA replication. Binds acidic phospholipids. This is Chromosomal replication initiator protein DnaA from Bacillus licheniformis (strain ATCC 14580 / DSM 13 / JCM 2505 / CCUG 7422 / NBRC 12200 / NCIMB 9375 / NCTC 10341 / NRRL NRS-1264 / Gibson 46).